The following is a 780-amino-acid chain: Endonuclease MutS2 (780 aa).

334 to 341 is a binding site for ATP; it reads GPNAGGKT. The Smr domain maps to 706-780; that stretch reads IDIRGMRSVD…GGSGKTIVEI (75 aa).

Belongs to the DNA mismatch repair MutS family. MutS2 subfamily. As to quaternary structure, homodimer. Binds to stalled ribosomes, contacting rRNA.

Its function is as follows. Endonuclease that is involved in the suppression of homologous recombination and thus may have a key role in the control of bacterial genetic diversity. In terms of biological role, acts as a ribosome collision sensor, splitting the ribosome into its 2 subunits. Detects stalled/collided 70S ribosomes which it binds and splits by an ATP-hydrolysis driven conformational change. Acts upstream of the ribosome quality control system (RQC), a ribosome-associated complex that mediates the extraction of incompletely synthesized nascent chains from stalled ribosomes and their subsequent degradation. Probably generates substrates for RQC. The chain is Endonuclease MutS2 from Borreliella burgdorferi (strain ATCC 35210 / DSM 4680 / CIP 102532 / B31) (Borrelia burgdorferi).